The primary structure comprises 275 residues: Nitrogenase iron protein 3 (275 aa).

9–16 is an ATP binding site; it reads GKGGIGKS. [4Fe-4S] cluster is bound at residue Cys97. Position 100 is an ADP-ribosylarginine; by dinitrogenase reductase ADP-ribosyltransferase (Arg100). Cys132 is a binding site for [4Fe-4S] cluster.

Belongs to the NifH/BchL/ChlL family. As to quaternary structure, homodimer. [4Fe-4S] cluster serves as cofactor. The reversible ADP-ribosylation of Arg-100 inactivates the nitrogenase reductase and regulates nitrogenase activity.

It carries out the reaction N2 + 8 reduced [2Fe-2S]-[ferredoxin] + 16 ATP + 16 H2O = H2 + 8 oxidized [2Fe-2S]-[ferredoxin] + 2 NH4(+) + 16 ADP + 16 phosphate + 6 H(+). Its function is as follows. The key enzymatic reactions in nitrogen fixation are catalyzed by the nitrogenase complex, which has 2 components: the iron protein (component 2) and a component 1 which is either a molybdenum-iron protein, a vanadium-iron, or an iron-iron protein. The polypeptide is Nitrogenase iron protein 3 (anfH) (Azotobacter vinelandii).